We begin with the raw amino-acid sequence, 449 residues long: Tubulin beta-6 chain (449 aa).

Q11, E69, S138, G142, T143, G144, N204, and N226 together coordinate GTP. E69 contributes to the Mg(2+) binding site. The segment at 425–449 (YQDATADDEGEYEEDEDEEEILDHE) is disordered. Positions 429–449 (TADDEGEYEEDEDEEEILDHE) are enriched in acidic residues.

It belongs to the tubulin family. As to quaternary structure, dimer of alpha and beta chains. A typical microtubule is a hollow water-filled tube with an outer diameter of 25 nm and an inner diameter of 15 nM. Alpha-beta heterodimers associate head-to-tail to form protofilaments running lengthwise along the microtubule wall with the beta-tubulin subunit facing the microtubule plus end conferring a structural polarity. Microtubules usually have 13 protofilaments but different protofilament numbers can be found in some organisms and specialized cells. Mg(2+) is required as a cofactor.

The protein resides in the cytoplasm. The protein localises to the cytoskeleton. Tubulin is the major constituent of microtubules, a cylinder consisting of laterally associated linear protofilaments composed of alpha- and beta-tubulin heterodimers. Microtubules grow by the addition of GTP-tubulin dimers to the microtubule end, where a stabilizing cap forms. Below the cap, tubulin dimers are in GDP-bound state, owing to GTPase activity of alpha-tubulin. The chain is Tubulin beta-6 chain (TUBB6) from Arabidopsis thaliana (Mouse-ear cress).